Here is a 729-residue protein sequence, read N- to C-terminus: MGRRKKIVQECERLMDEPEQIRNIAIAAHVDHGKTTLTDNLLAGAGMISDETAGEQLAMDTEEDEQERGITIDAANVSMTHEYEDENHLINLIDTPGHVDFGGDVTRAMRAVDGALVVVDAVEGAMPQTETVLRQALREGVKPTLFINKVDRLISELQEGPEEMQQRLTGVIGDVNELIRGMTEEMDDINEDWTVSVEDGTVGFGSALYKWGVSMPSMQRTGMDFGEIIELERADKRQELHERTPLSDVVLDMVCEHFPNPVDAQPRRIPRIWRGDADSEVAEAMELVNEDGELVMMVTDIGIDPHAGEIAAGRVFSGTIEKGQDLYVSGTAGTNRVQSVGIYMGGEREEVERVPAGNIAAVTGLKDAIAGSTVSSVEMTPFESIEHISEPVITKSVEAKNMDDLPKLIETLQQVAKEDPTIQIEINEDTGEHLISGQGELHLEVITQRIERNQGIPVNTGEPIVVFREAPQQESREVEGRSPNNHNRFYITVEPLEDDIVETIKMGDVSMDMPELERREELMEQGMDKDTAQNVETIHNTNVFIDDTKGIQHLNETMELVVEGLEEALNDGPLAAEPVEGALIRLHDARLHEDAIHRGPAQVIPAVREAVHNALIDAEIKLLEPIQEVRIDVPNEHMGAASGEIQGRRGRVDDMYQEGDLMVVEGVAPVDEMIGFSSDIRSATEGRASWNTENAGFRVMADNLQPETIDEIRERKGMKLELPEQIDYF.

The 244-residue stretch at 19-262 (EQIRNIAIAA…MVCEHFPNPV (244 aa)) folds into the tr-type G domain. Residues 28–35 (AHVDHGKT), 94–98 (DTPGH), and 148–151 (NKVD) contribute to the GTP site. His597 is subject to Diphthamide.

The protein belongs to the TRAFAC class translation factor GTPase superfamily. Classic translation factor GTPase family. EF-G/EF-2 subfamily.

Its subcellular location is the cytoplasm. Functionally, catalyzes the GTP-dependent ribosomal translocation step during translation elongation. During this step, the ribosome changes from the pre-translocational (PRE) to the post-translocational (POST) state as the newly formed A-site-bound peptidyl-tRNA and P-site-bound deacylated tRNA move to the P and E sites, respectively. Catalyzes the coordinated movement of the two tRNA molecules, the mRNA and conformational changes in the ribosome. This is Elongation factor 2 from Natronomonas pharaonis (strain ATCC 35678 / DSM 2160 / CIP 103997 / JCM 8858 / NBRC 14720 / NCIMB 2260 / Gabara) (Halobacterium pharaonis).